The chain runs to 104 residues: MPTPESAAFLAKKPTVPPTFDGVDYNDTKRLKQAQDAIIREQWVRVMMGRLVREELSKCYYREGVNHLEKCGHLRERYLQLLSENRVQGYLFEQQNHFANQPKQ.

It belongs to the complex I NDUFS6 subunit family. Complex I is composed of about 40 different subunits.

The protein localises to the mitochondrion inner membrane. Its function is as follows. Accessory subunit of the mitochondrial membrane respiratory chain NADH dehydrogenase (Complex I), that is believed not to be involved in catalysis. Complex I functions in the transfer of electrons from NADH to the respiratory chain. The immediate electron acceptor for the enzyme is believed to be ubiquinone. The protein is NADH-ubiquinone oxidoreductase 12 kDa subunit, mitochondrial (nuo-12.3) of Neurospora crassa (strain ATCC 24698 / 74-OR23-1A / CBS 708.71 / DSM 1257 / FGSC 987).